Consider the following 147-residue polypeptide: Small ribosomal subunit protein bS18 (147 aa).

It belongs to the bacterial ribosomal protein bS18 family. Part of the 30S ribosomal subunit. Forms a tight heterodimer with protein bS6.

Functionally, binds as a heterodimer with protein bS6 to the central domain of the 16S rRNA, where it helps stabilize the platform of the 30S subunit. The chain is Small ribosomal subunit protein bS18 from Dehalococcoides mccartyi (strain ATCC BAA-2100 / JCM 16839 / KCTC 5957 / BAV1).